We begin with the raw amino-acid sequence, 433 residues long: MSKIVKVIGREIIDSRGNPTVEAEVHLEGGFVGMAAAPSGASTGSREALELRDGDKSRFLGKGVLKALEAVNGPIAQALLGKDAKDQATVDQIMIDLDGTENKSKFGANAILAVSLANAKAAAAAKGMPLYAHIAELNGTPGVYSMPLPMMNIINGGEHADNNVDIQEFMIQPVGAKTLKEAVRMGAEVFHNLAKVLKSKGYNTAVGDEGGFAPNLKSNAEALEVIAEAVAAAGYKLGTDITLAMDCAASEFYDAEKKEYNLKGEGRVFTSNGFSDFLADLTTKFPIVSIEDGLDESDWDGFAYQTAELGKKIQIVGDDLFVTNTKILKRGIDNGIANSILIKFNQIGSLTETLAAIKMAKDAGYTAVISHRSGETEDATIADLAVGTAAGQIKTGSMSRSDRVAKYNQLIRIEEALGAKAPFRGLKEVKNQA.

(2R)-2-phosphoglycerate is bound at residue Gln-167. Glu-209 functions as the Proton donor in the catalytic mechanism. Residues Asp-246, Glu-291, and Asp-318 each coordinate Mg(2+). The (2R)-2-phosphoglycerate site is built by Lys-343, Arg-372, Ser-373, and Lys-394. Lys-343 functions as the Proton acceptor in the catalytic mechanism.

It belongs to the enolase family. As to quaternary structure, component of the RNA degradosome, a multiprotein complex involved in RNA processing and mRNA degradation. Mg(2+) serves as cofactor.

Its subcellular location is the cytoplasm. It is found in the secreted. It localises to the cell surface. It catalyses the reaction (2R)-2-phosphoglycerate = phosphoenolpyruvate + H2O. The protein operates within carbohydrate degradation; glycolysis; pyruvate from D-glyceraldehyde 3-phosphate: step 4/5. Its function is as follows. Catalyzes the reversible conversion of 2-phosphoglycerate (2-PG) into phosphoenolpyruvate (PEP). It is essential for the degradation of carbohydrates via glycolysis. The polypeptide is Enolase (Aeromonas hydrophila subsp. hydrophila (strain ATCC 7966 / DSM 30187 / BCRC 13018 / CCUG 14551 / JCM 1027 / KCTC 2358 / NCIMB 9240 / NCTC 8049)).